A 614-amino-acid chain; its full sequence is Numb-like protein (614 aa).

Disordered regions lie at residues 1–68 (MSRS…QWQA), 223–283 (GSFR…PVAA), 371–420 (FASA…LEEV), 448–468 (QQQQ…LQPF), and 539–614 (LGKA…EIEL). The PID domain maps to 74 to 223 (RKGTCSFPVR…ASRTSFAREG (150 aa)). Residues Ser224 and Ser228 each carry the phosphoserine modification. Positions 233 to 245 (PAEREAGDKKKAE) are enriched in basic and acidic residues. Residues 246-260 (AAAAPAVAPGPAQPG) are compositionally biased toward low complexity. Ser263 is modified (phosphoserine). At Thr279 the chain carries Phosphothreonine. Over residues 371–390 (FASAGAPVPGPPSATTGTSA) the composition is skewed to low complexity. Over residues 409-418 (TPSEAERWLE) the composition is skewed to basic and acidic residues. At Ser411 the chain carries Phosphoserine. Positions 563–578 (NGAPWPPEPAPAPAPE) are enriched in pro residues.

Associates with EPS15 and NOTCH1. Interacts (via PTB domain) with MAP3K7IP2 (via C-terminal). Interacts (via C-terminal) with TRAF6 (via TRAF domains).

Its subcellular location is the cytoplasm. Its function is as follows. Plays a role in the process of neurogenesis. Required throughout embryonic neurogenesis to maintain neural progenitor cells, also called radial glial cells (RGCs), by allowing their daughter cells to choose progenitor over neuronal cell fate. Not required for the proliferation of neural progenitor cells before the onset of embryonic neurogenesis. Also required postnatally in the subventricular zone (SVZ) neurogenesis by regulating SVZ neuroblasts survival and ependymal wall integrity. Negative regulator of NF-kappa-B signaling pathway. The inhibition of NF-kappa-B activation is mediated at least in part, by preventing MAP3K7IP2 to interact with polyubiquitin chains of TRAF6 and RIPK1 and by stimulating the 'Lys-48'-linked polyubiquitination and degradation of TRAF6 in cortical neurons. This chain is Numb-like protein (Numbl), found in Rattus norvegicus (Rat).